Reading from the N-terminus, the 367-residue chain is MLYLLFAPLADDFQLANLFRYITFRTGGALMTAMLIAFVFGKPMIGWLRRKQGKGQPIRAEGIERHVVEKAGTPTMGGFLILLGVMVGTLLWADLTNAYVWIVIFVTAGFGVIGFIDDYLKVTKQTTAGFGGRFKLVGEFAIALIAVVWATHTARSLGVEPGIETSIAVPFFKDLMINIGPLFFVFGCVVIVGSGNAVNMTDGLDGLAIVPVMIAAATFGVIAYVVGRVDFAEYLQVHYTAGAGEILIFCGALIGAGIGFLWWNAPPAMVFMGDTGSLSLGGALGTIAVAIKHELVLAIVGGLFVLELVSVMVQVASFKLFGKRVFRMAPIHHHFEKKGWAEPTIVIRFWIIAVILALIGLATLKLR.

The next 10 helical transmembrane spans lie at 28–48 (GALMTAMLIAFVFGKPMIGWL), 75–95 (TMGGFLILLGVMVGTLLWADL), 96–116 (TNAYVWIVIFVTAGFGVIGFI), 134–154 (FKLVGEFAIALIAVVWATHTA), 175–195 (LMINIGPLFFVFGCVVIVGSG), 206–226 (GLAIVPVMIAAATFGVIAYVV), 243–263 (AGEILIFCGALIGAGIGFLWW), 271–291 (FMGDTGSLSLGGALGTIAVAI), 295–315 (LVLAIVGGLFVLELVSVMVQV), and 344–364 (TIVIRFWIIAVILALIGLATL).

The protein belongs to the glycosyltransferase 4 family. MraY subfamily. Mg(2+) serves as cofactor.

It localises to the cell inner membrane. It carries out the reaction UDP-N-acetyl-alpha-D-muramoyl-L-alanyl-gamma-D-glutamyl-meso-2,6-diaminopimeloyl-D-alanyl-D-alanine + di-trans,octa-cis-undecaprenyl phosphate = di-trans,octa-cis-undecaprenyl diphospho-N-acetyl-alpha-D-muramoyl-L-alanyl-D-glutamyl-meso-2,6-diaminopimeloyl-D-alanyl-D-alanine + UMP. The protein operates within cell wall biogenesis; peptidoglycan biosynthesis. Functionally, catalyzes the initial step of the lipid cycle reactions in the biosynthesis of the cell wall peptidoglycan: transfers peptidoglycan precursor phospho-MurNAc-pentapeptide from UDP-MurNAc-pentapeptide onto the lipid carrier undecaprenyl phosphate, yielding undecaprenyl-pyrophosphoryl-MurNAc-pentapeptide, known as lipid I. The protein is Phospho-N-acetylmuramoyl-pentapeptide-transferase of Maricaulis maris (strain MCS10) (Caulobacter maris).